Here is a 970-residue protein sequence, read N- to C-terminus: UvrABC system protein A (970 aa).

Position 34–41 (34–41) interacts with ATP; sequence GVSGSGKS. The segment at 284 to 311 adopts a C4-type zinc-finger fold; that stretch reads CPEHGAVMDELSPRLFSFNSPYGACPDC. ABC transporter domains lie at 340–617 and 637–965; these read WSEK…QRSL and GNGA…KYLA. 669-676 is an ATP binding site; that stretch reads GVSGSGKS. Residues 768 to 794 form a C4-type zinc finger; the sequence is CEACAGQGVNVIEMNFLPDVYVQCDVC.

It belongs to the ABC transporter superfamily. UvrA family. In terms of assembly, forms a heterotetramer with UvrB during the search for lesions.

It localises to the cytoplasm. The UvrABC repair system catalyzes the recognition and processing of DNA lesions. UvrA is an ATPase and a DNA-binding protein. A damage recognition complex composed of 2 UvrA and 2 UvrB subunits scans DNA for abnormalities. When the presence of a lesion has been verified by UvrB, the UvrA molecules dissociate. The polypeptide is UvrABC system protein A (Synechocystis sp. (strain ATCC 27184 / PCC 6803 / Kazusa)).